The sequence spans 325 residues: D site-binding protein (325 aa).

Disordered stretches follow at residues 1 to 99 (MARP…APGL), 127 to 200 (GLPP…DTVE), and 229 to 255 (RFSE…EQKD). The segment covering 17-28 (GPAGTPPGGGAL) has biased composition (gly residues). Composition is skewed to low complexity over residues 29–38 (LGLRSLLQGT) and 57–80 (ALPA…PAGA). Ser86 carries the phosphoserine modification. Pro residues predominate over residues 129–153 (PPSPPPPGGPSPEPSPARTPAPSPG). Residues 157–167 (CGSASPRSSPG) are compositionally biased toward low complexity. A bZIP domain is found at 255–318 (DEKYWSRRYK…SHYRAVLSRY (64 aa)). A basic motif region spans residues 257–279 (KYWSRRYKNNEAAKRSRDARRLK). Residues 283 to 297 (ISVRAAFLEKENALL) are leucine-zipper.

It belongs to the bZIP family. PAR subfamily. In terms of assembly, binds DNA as a homodimer or a heterodimer. Can form a heterodimer with TEF. Ubiquitously expressed. Expressed in the suprachiasmatic nuclei (SCN) and in most peripheral tissues, with a strong circadian rhythmicity.

The protein localises to the nucleus. Functionally, this transcriptional activator recognizes and binds to the sequence 5'-RTTAYGTAAY-3' found in the promoter of genes such as albumin, CYP2A4 and CYP2A5. It is not essential for circadian rhythm generation, but modulates important clock output genes. May be a direct target for regulation by the circadian pacemaker component clock. May affect circadian period and sleep regulation. This Homo sapiens (Human) protein is D site-binding protein (DBP).